The sequence spans 524 residues: Cytochrome P450 1A1 (524 aa).

The interval 33-44 (LRTQVPKGLKTP) is mitochondrial targeting signal. O-linked (GlcNAc) serine glycosylation is present at serine 71. Phenylalanine 228 contacts substrate. Heme is bound at residue cysteine 461.

Belongs to the cytochrome P450 family. As to quaternary structure, interacts with cytosolic chaperones HSP70 and HSP90; this interaction is required for initial targeting to mitochondria. Interacts (via mitochondrial targeting signal) with TOMM40 (via N-terminus); this interaction is required for translocation across the mitochondrial outer membrane. Requires heme as cofactor.

Its subcellular location is the endoplasmic reticulum membrane. It is found in the mitochondrion inner membrane. The protein resides in the microsome membrane. The protein localises to the cytoplasm. The catalysed reaction is an organic molecule + reduced [NADPH--hemoprotein reductase] + O2 = an alcohol + oxidized [NADPH--hemoprotein reductase] + H2O + H(+). It carries out the reaction estrone + reduced [NADPH--hemoprotein reductase] + O2 = 2-hydroxyestrone + oxidized [NADPH--hemoprotein reductase] + H2O + H(+). The enzyme catalyses estrone + reduced [NADPH--hemoprotein reductase] + O2 = 4-hydroxyestrone + oxidized [NADPH--hemoprotein reductase] + H2O + H(+). It catalyses the reaction estrone + reduced [NADPH--hemoprotein reductase] + O2 = 6alpha-hydroxyestrone + oxidized [NADPH--hemoprotein reductase] + H2O + H(+). The catalysed reaction is estrone + reduced [NADPH--hemoprotein reductase] + O2 = 15alpha-hydroxyestrone + oxidized [NADPH--hemoprotein reductase] + H2O + H(+). It carries out the reaction estrone + reduced [NADPH--hemoprotein reductase] + O2 = 16alpha-hydroxyestrone + oxidized [NADPH--hemoprotein reductase] + H2O + H(+). The enzyme catalyses 17beta-estradiol + reduced [NADPH--hemoprotein reductase] + O2 = 2-hydroxy-17beta-estradiol + oxidized [NADPH--hemoprotein reductase] + H2O + H(+). It catalyses the reaction 17beta-estradiol + reduced [NADPH--hemoprotein reductase] + O2 = 4-hydroxy-17beta-estradiol + oxidized [NADPH--hemoprotein reductase] + H2O + H(+). The catalysed reaction is 17beta-estradiol + reduced [NADPH--hemoprotein reductase] + O2 = 6alpha-hydroxy-17beta-estradiol + oxidized [NADPH--hemoprotein reductase] + H2O + H(+). It carries out the reaction 17beta-estradiol + reduced [NADPH--hemoprotein reductase] + O2 = 7alpha-hydroxy-17beta-estradiol + oxidized [NADPH--hemoprotein reductase] + H2O + H(+). The enzyme catalyses 17beta-estradiol + reduced [NADPH--hemoprotein reductase] + O2 = 15alpha-hydroxy-17beta-estradiol + oxidized [NADPH--hemoprotein reductase] + H2O + H(+). It catalyses the reaction (5Z,8Z,11Z)-eicosatrienoate + reduced [NADPH--hemoprotein reductase] + O2 = 19-hydroxy-(5Z,8Z,11Z)-eicosatrienoate + oxidized [NADPH--hemoprotein reductase] + H2O + H(+). The catalysed reaction is (5Z,8Z,11Z,14Z)-eicosatetraenoate + reduced [NADPH--hemoprotein reductase] + O2 = 16-hydroxy-(5Z,8Z,11Z,14Z)-eicosatetraenoate + oxidized [NADPH--hemoprotein reductase] + H2O + H(+). It carries out the reaction (5Z,8Z,11Z,14Z)-eicosatetraenoate + reduced [NADPH--hemoprotein reductase] + O2 = 17-hydroxy-(5Z,8Z,11Z,14Z)-eicosatetraenoate + oxidized [NADPH--hemoprotein reductase] + H2O + H(+). The enzyme catalyses (5Z,8Z,11Z,14Z)-eicosatetraenoate + reduced [NADPH--hemoprotein reductase] + O2 = 18-hydroxy-(5Z,8Z,11Z,14Z)-eicosatetraenoate + oxidized [NADPH--hemoprotein reductase] + H2O + H(+). It catalyses the reaction (5Z,8Z,11Z,14Z)-eicosatetraenoate + reduced [NADPH--hemoprotein reductase] + O2 = 19-hydroxy-(5Z,8Z,11Z,14Z)-eicosatetraenoate + oxidized [NADPH--hemoprotein reductase] + H2O + H(+). The catalysed reaction is (5Z,8Z,11Z,14Z,17Z)-eicosapentaenoate + reduced [NADPH--hemoprotein reductase] + O2 = 19-hydroxy-(5Z,8Z,11Z,14Z,17Z)-eicosapentaenoate + oxidized [NADPH--hemoprotein reductase] + H2O + H(+). It carries out the reaction (5Z,8Z,11Z,14Z)-eicosatetraenoate + reduced [NADPH--hemoprotein reductase] + O2 = (8R,9S)-epoxy-(5Z,11Z,14Z)-eicosatrienoate + oxidized [NADPH--hemoprotein reductase] + H2O + H(+). The enzyme catalyses (5Z,8Z,11Z,14Z)-eicosatetraenoate + reduced [NADPH--hemoprotein reductase] + O2 = (11R,12S)-epoxy-(5Z,8Z,14Z)-eicosatrienoate + oxidized [NADPH--hemoprotein reductase] + H2O + H(+). It catalyses the reaction (5Z,8Z,11Z,14Z)-eicosatetraenoate + reduced [NADPH--hemoprotein reductase] + O2 = (14S,15R)-epoxy-(5Z,8Z,11Z)-eicosatrienoate + oxidized [NADPH--hemoprotein reductase] + H2O + H(+). The catalysed reaction is (5Z,8Z,11Z,14Z)-eicosatetraenoate + reduced [NADPH--hemoprotein reductase] + O2 = (14R,15S)-epoxy-(5Z,8Z,11Z)-eicosatrienoate + oxidized [NADPH--hemoprotein reductase] + H2O + H(+). It carries out the reaction (5Z,8Z,11Z,14Z,17Z)-eicosapentaenoate + reduced [NADPH--hemoprotein reductase] + O2 = (17R,18S)-epoxy-(5Z,8Z,11Z,14Z)-eicosatetraenoate + oxidized [NADPH--hemoprotein reductase] + H2O + H(+). The enzyme catalyses (4Z,7Z,10Z,13Z,16Z,19Z)-docosahexaenoate + reduced [NADPH--hemoprotein reductase] + O2 = (19S,20R)-epoxy-(4Z,7Z,10Z,13Z,16Z)-docosapentaenoate + oxidized [NADPH--hemoprotein reductase] + H2O + H(+). It catalyses the reaction (4Z,7Z,10Z,13Z,16Z,19Z)-docosahexaenoate + reduced [NADPH--hemoprotein reductase] + O2 = (19R,20S)-epoxy-(4Z,7Z,10Z,13Z,16Z)-docosapentaenoate + oxidized [NADPH--hemoprotein reductase] + H2O + H(+). The catalysed reaction is all-trans-retinol + reduced [NADPH--hemoprotein reductase] + O2 = all-trans-retinal + oxidized [NADPH--hemoprotein reductase] + 2 H2O + H(+). It carries out the reaction all-trans-retinal + reduced [NADPH--hemoprotein reductase] + O2 = all-trans-retinoate + oxidized [NADPH--hemoprotein reductase] + H2O + 2 H(+). The enzyme catalyses (13S)-hydroperoxy-(9Z,11E)-octadecadienoate = 13-oxo-(9Z,11E)-octadecadienoate + H2O. It catalyses the reaction (12S)-hydroperoxy-(5Z,8Z,10E,14Z)-eicosatetraenoate = 12-oxo-(5Z,8Z,10E,14Z)-eicosatetraenoate + H2O. The catalysed reaction is (15S)-hydroperoxy-(5Z,8Z,11Z,13E)-eicosatetraenoate = 15-oxo-(5Z,8Z,11Z,13E)-eicosatetraenoate + H2O. It carries out the reaction (5S)-hydroperoxy-(6E,8Z,11Z,14Z)-eicosatetraenoate = 5-oxo-(6E,8Z,11Z,14Z)-eicosatetraenoate + H2O. The protein operates within steroid hormone biosynthesis. It functions in the pathway lipid metabolism; fatty acid metabolism. Its pathway is cofactor metabolism; retinol metabolism. Functionally, a cytochrome P450 monooxygenase involved in the metabolism of various endogenous substrates, including fatty acids, steroid hormones and vitamins. Mechanistically, uses molecular oxygen inserting one oxygen atom into a substrate, and reducing the second into a water molecule, with two electrons provided by NADPH via cytochrome P450 reductase (CPR; NADPH-ferrihemoprotein reductase). Catalyzes the hydroxylation of carbon-hydrogen bonds. Exhibits high catalytic activity for the formation of hydroxyestrogens from estrone (E1) and 17beta-estradiol (E2), namely 2-hydroxy E1 and E2, as well as D-ring hydroxylated E1 and E2 at the C15alpha and C16alpha positions. Displays different regioselectivities for polyunsaturated fatty acids (PUFA) hydroxylation. Catalyzes the epoxidation of double bonds of certain PUFA. Converts arachidonic acid toward epoxyeicosatrienoic acid (EET) regioisomers, 8,9-, 11,12-, and 14,15-EET, that function as lipid mediators in the vascular system. Displays an absolute stereoselectivity in the epoxidation of eicosapentaenoic acid (EPA) producing the 17(R),18(S) enantiomer. May play an important role in all-trans retinoic acid biosynthesis in extrahepatic tissues. Catalyzes two successive oxidative transformation of all-trans retinol to all-trans retinal and then to the active form all-trans retinoic acid. May also participate in eicosanoids metabolism by converting hydroperoxide species into oxo metabolites (lipoxygenase-like reaction, NADPH-independent). The sequence is that of Cytochrome P450 1A1 (CYP1A1) from Mesocricetus auratus (Golden hamster).